The chain runs to 317 residues: MMICYSPITTCSRNAISIKRHLGSRLYGVVAHGSSKFSCYSLLSGLSRRHYTGFRVSVSNRPSSWHDKGLFGSVLINRPTVAPKEKLEVSFLSPEANMKCSKIESNMRNLYCYSRFAYTGVIVSLLVCYSSTSQSAYADSSRDKDANNVHHHSSDGKFHNGKRVYTDYSIIGIPGDGRCLFRSVAHGFCLRSGKLAPGEKMQRELADELRTRVADEFIQRRQETEWFVEGDFDTYVRQIRDPHVWGGEPELFMASHVLQMPITVYMKDDKAGGLISIAEYGQEYGKDDPIRVLYHGFGHYDALLLHESKASIPKSKL.

The OTU domain maps to 168–306 (YSIIGIPGDG…FGHYDALLLH (139 aa)). Asp176 is an active-site residue. Cys179 serves as the catalytic Nucleophile. Residue His299 is part of the active site.

This sequence belongs to the peptidase C65 family.

Its subcellular location is the cytoplasm. It carries out the reaction Thiol-dependent hydrolysis of ester, thioester, amide, peptide and isopeptide bonds formed by the C-terminal Gly of ubiquitin (a 76-residue protein attached to proteins as an intracellular targeting signal).. Its function is as follows. Hydrolase that can remove conjugated ubiquitin from proteins in vitro and may therefore play an important regulatory role at the level of protein turnover by preventing degradation. Cysteine protease with a preference for 'Lys-63' over 'Lys-48'-linked over 'Met-1' ubiquitin (UB) tetramers (e.g. Ub3 and Ub4) as substrates. Also cleaves RUB-GST fusion. The protein is OVARIAN TUMOR DOMAIN-containing deubiquitinating enzyme 4 of Arabidopsis thaliana (Mouse-ear cress).